A 253-amino-acid chain; its full sequence is Chorismate mutase 2, cytosolic (253 aa).

Residues Asp-2–Asp-253 form the Chorismate mutase domain.

In terms of assembly, homodimer. Interacts with Cmu1 of the fungal pathogen Ustilago maydis.

It localises to the cytoplasm. The protein localises to the cytosol. The enzyme catalyses chorismate = prephenate. Its pathway is metabolic intermediate biosynthesis; prephenate biosynthesis; prephenate from chorismate: step 1/1. With respect to regulation, no allosteric regulation. This Zea mays (Maize) protein is Chorismate mutase 2, cytosolic.